A 781-amino-acid polypeptide reads, in one-letter code: Transcription factor Sp3 (781 aa).

The segment covering 1-12 (MTAPEKPVKQEE) has biased composition (basic and acidic residues). Disordered regions lie at residues 1–53 (MTAP…AAQD) and 65–88 (TCSK…AGAP). The segment covering 20-31 (SGGGGGGGGGHG) has biased composition (gly residues). Low complexity predominate over residues 32-53 (EYLQQQQQHGNGAVAAAAAAQD). At Ser73 the chain carries Phosphoserine. Lys120 is covalently cross-linked (Glycyl lysine isopeptide (Lys-Gly) (interchain with G-Cter in SUMO)). The transactivation domain (Gln-rich) stretch occupies residues 138–237 (QYVLPLQNLQ…IPQTGQVQVQ (100 aa)). A disordered region spans residues 301–338 (QAMDSSDNSERTGERVSPDINETNTDTDLFVPTSSSSQ). Basic and acidic residues predominate over residues 308–317 (NSERTGERVS). Polar residues predominate over residues 320–338 (INETNTDTDLFVPTSSSSQ). The interval 350–499 (QQNTNSLTTS…TPVQTLTLGQ (150 aa)) is transactivation domain (Gln-rich). The 9aaTAD motif lies at 461 to 469 (VTWQTFQVQ). The interval 534–620 (IQLHPGENAD…RGTNLGKKKQ (87 aa)) is repressor domain. The residue at position 551 (Lys551) is an N6-acetyllysine; alternate. Lys551 is covalently cross-linked (Glycyl lysine isopeptide (Lys-Gly) (interchain with G-Cter in SUMO); alternate). Residue Lys551 forms a Glycyl lysine isopeptide (Lys-Gly) (interchain with G-Cter in SUMO1); alternate linkage. Lys551 participates in a covalent cross-link: Glycyl lysine isopeptide (Lys-Gly) (interchain with G-Cter in SUMO2); alternate. Residues Ser563 and Ser566 each carry the phosphoserine modification. Lys593 is covalently cross-linked (Glycyl lysine isopeptide (Lys-Gly) (interchain with G-Cter in SUMO2)). A C2H2-type 1 zinc finger spans residues 621 to 645 (HICHIPGCGKVYGKTSHLRAHLRWH). Ser646 carries the post-translational modification Phosphoserine. 2 consecutive C2H2-type zinc fingers follow at residues 651-675 (FVCN…RRTH) and 681-703 (FVCP…IKTH).

The protein belongs to the Sp1 C2H2-type zinc-finger protein family. In terms of assembly, interacts with HLTF; the interaction may be required for basal transcriptional activity of HLTF. Interacts with HDAC1; the interaction deacetylates SP3 and regulates its transcriptional activity. Interacts with HDAC2 (preferably the CK2-phosphorylated form); the interaction deacetylates SP3 and regulates its transcriptional activity. Interacts with MEIS2 isoform 4 and PBX1 isoform PBX1a. Post-translationally, not glycosylated. Acetylated by histone acetyltransferase p300, deacetylated by HDACs. Acetylation/deacetylation states regulate transcriptional activity. Acetylation appears to activate transcription. Alternate sumoylation and acetylation at Lys-551 also control transcriptional activity. Ceramides can also regulate acetylation/deacetylation events through altering the interaction of HDAC with SP3. In vitro, C(18)-ceramides, but not C(16)-ceramides, increase the interaction of HDAC1 with SP3 and enhance the deacetylation of SP3 and the subsequent repression of the TERT promoter. In terms of processing, sumoylated on all isoforms. Sumoylated on 2 sites in longer isoforms with Lys-551 being the major site. Sumoylation at this site promotes nuclear localization to the nuclear periphery, nuclear dots and PML nuclear bodies. Sumoylation on Lys-551 represses the transactivation activity, except for the largest isoform, L-Sp3, which has little effect on transactivation. Alternate sumoylation and acetylation at Lys-551 also control transcriptional activity. Ubiquitously expressed.

The protein resides in the nucleus. Its subcellular location is the PML body. Functionally, transcriptional factor that can act as an activator or repressor depending on isoform and/or post-translational modifications. Binds to GT and GC boxes promoter elements. Competes with SP1 for the GC-box promoters. Weak activator of transcription but can activate a number of genes involved in different processes such as cell-cycle regulation, hormone-induction and house-keeping. This chain is Transcription factor Sp3 (SP3), found in Homo sapiens (Human).